We begin with the raw amino-acid sequence, 2475 residues long: MGNRGSSTSSRPPLSSEANIYAKLQDHIQRQTRPFSGGGYFNGGGDKNPVQHIKDYHIDSVSSKAKLRIIEGIIKAISKIGFKIDTKQPIEDILKDIKKQLPDPRAGSTFVKNAEKQETVCKMIADAINQEFIDLGQDKLIDTTEGAASICRQIVLYINSLTHGLRAEYLDVHGSIENTLENIKLLNDAIKQLHERMVTEVTKAAPNEEVINAVTMIEAVYRRLLNEQNLQISILTNFIDNILTPTQKELDKLQTDEVDIIKLLNDTNSVLGTKNFGKVLSYTLCNLGIAASVANKINKALQRVGLKVEQYLQSKNWAEFDKELDLKRFSGLVSAENIAEFEKAVNLLRQTFNERHKILENNCAKKGGDEVKTPLDKRIEAQRLDRKHILMEFLNKSTQAYNDFLENVKKIGIKLVKEIALTPNITRLRDALSRINDMGTIALDLSLIGFYTNAAAREERETFLTQLTLVKNVLEEISKTDPNFKNLYDSCFRLLQIIDFYTDIVQKKYGGGEDCECTRVGGAALTVEELGLSKAARSQVDLNQAINTFMYYYYVAQIYSNLTHNKQEFQSYEENYATILGDAIAGRLMQLDTEKNARINSPAVDLARGHVGPNPGGAQEVDWKAAVSAIELEYDVKRRFYRALEGLDLYLKNITKTFVNNIDSIQTVQQMLDGVRIIGRWFTEATGDTLAQVFESFPTSAGNDSNVFTDNAPAGHYYEKVAAEIQQGRSVGTLRPVRASQAKNIRDLIGRSLSNFQALKNIINAFARIGDMLGGEELRQMVPMSPLQIYKTLLEYLQHSALSVGLKNLNQSEIGGQRMALAQTAEEAAQRVYLSTVRVNDALSSRWETEDMFFTFMLKSMAAKIFIVLGIYDMFERPEPVYKLIPTRMILGGADELEPEVIPEAAELYFRLPRLAEFYQKLFSFRDGNVQISMLPELEGIFSGLIRIIFMRPIELINIGDYSETEIRQLIKEINVIYQHFNLEYGEQEATKKALIHFVNEINRRFGVITRTEWEKFQRIVQEARTMNDFGMMNQTNYSILPDEDGYTQSSQLLPSDRFIGPSSQPTPKWRPALYNIDSVDVQTGMLQPNSQWDLVQKFRKQLSEMFEDPSLQQELGKISYQELIRQAINELKKEHTDKIQIVSKLIQGSESLADTDVNKIFLFHETVITGLNLLSAIYVLLNNFRNNIKGLDLDTIQKSIIEWLRETQPPDVNHANLLDWLGRKHGAISEIRNPGLVVKANNARLSEVYPDPTTDANTPQDRNLTTETLFAWIVQYVGIPAGGGVRPEQELAARYLVDNQRIMQLLLTNIFEITSSFNKMIQVRFPETSTAHVHLDFTGLISLIDSLMADTKYFLDLLRPHIDKNIIQYYENRSNPGSFYWLEEHLIDKLIKPPTDARGRPLPGGELGLEGVNQIINKTYTLLTKPYNVLQLRGGAQRRDAANIQINNNPQSSERFEQYGRVFSKLVFYDALENNSGLRVEQVALGDFRLSNLIRTNNAQEENTLSYWDNIALRTYANVNDAANNLRRYRLYGSDYGIQNNRSMMMVFNQLIASYITRFYDAPSGKIYLNLINAFANGNFSQAVMEMGYAHPDLARNNNAFGHRGDPTEQSVLLLSLGLILQRLIKDTNRQGLSQHLISTLTEIPIYLKENYRANLPLFNKMFNILISQGELLKQFIQYTNVQLARPNLTALLRANNDSVIYYNNNNVPMTGLSIGQAAMRGIGGVFRPNVTLMPLGDAQNNTSDIVRKRLVAVIDGIIRGSHTLADSAMEVLHELTDHPIYLETEEHFIQNYMSRYNKEPLMPFSLSLYYLRDLRIENNEVYDPLLYPNLESGSPEFKLLYGTRKLLGNDPVQLSDMPGVQLIMKNYNETVVAREQITPTRFEHFYTHAIQALRFIVNIRSFKTVMTYNENTFGGVNLISEDRNDKPIITAGIGMNAVYSLRKTLQDVISFVESSYQEEQINNIHKIVSPKGQTRTLGSNRERERIFNLFDMNIIPINVNALMRSIPLANIYNYDYSFEEIACLMYGISAEKVRSLNTAAPQPDVAEVLNIPNRPPINTREFMLKLLINPYVSVSITQYGNELLSKGNAGYMSRIFRGDNALNMGRPKFLSDQIFNKVLFGSLYPTQFDYDEAGPSLAAGIQRGRERWGHPMSIYINQALHEIVRTIRLAETVRGLRNVIDRNQIIGELNAFRTQLEDTLREVNNLVQTPEIQNNPTPEIIAAVQNWGQQYRAQITDLIDLIGNAGQANSMISLIQNINVQTAGAQLTALFNRRGLPAPPPRQVLQNDIEAIQWFMTIVINHPPILIAPFMLLVNNLKEFLNTLERYVYKTPRWLGPGTARIAQPPVGMAPGINMRHHTSYTENSVLTYITEQNREEGPWSIVKQVGVGIQKPTLVQIGKDRFDTRLIRNLIFITNVQRLLRLRLNLELSQFRNVLVSPDHIINPSITEYGFSITGPSETFSDKQYDSDIRIL.

Gly2 is lipidated: N-myristoyl glycine; by host. A coiled-coil region spans residues 2184–2211 (RNQIIGELNAFRTQLEDTLREVNNLVQT).

It belongs to the asfivirus polyprotein pp220 family. In terms of processing, specific enzymatic cleavages in vivo by the viral pS273R protease yield mature proteins.

The protein localises to the host cytoplasm. The protein resides in the host perinuclear region. Its subcellular location is the virion. It is found in the host nucleus. Essential for the core assembly. Its myristoyl moiety may function as a membrane-anchoring signal to bind the developing core shell to the inner viral envelope. Functionally, the structural protein p34 is a component of the virus core shell. In terms of biological role, the structural protein p14 is a component of the virus core shell. Its function is as follows. The structural protein p37 is a component of the virus core shell. The structural protein p150 is a component of the virus core shell. In African swine fever virus (isolate Tick/Malawi/Lil 20-1/1983) (ASFV), this protein is Polyprotein pp220.